A 172-amino-acid chain; its full sequence is MTFDIYIPENLAFSDYIAVIQVARTWADAQDRKDPERFLATVAPEVTIDYSLLIPAWKSKVYTADEFVATWLAPDRVGLSVLATQHLLGMPYIKSATRDEIVVEFQEVASHGRRQDDDGAFGGKIGETADGRGWVEHRYVKIDGQWKIDLIKPSIIYMAGDWERVRRAEGAE.

Catalysis depends on residues H86 and H111.

It belongs to the scytalone dehydratase family. As to quaternary structure, homotrimer. Each subunit contains an active site, located in the central part of the hydrophobic core of the monomer, which functions independently.

It participates in secondary metabolite biosynthesis; flavonoid biosynthesis. In terms of biological role, cytochrome P450 monooxygenase; part of the gene cluster that mediates the biosynthesis of chlorflavonin, a fungal flavonoid with acetolactate synthase inhibitory activity. Within the pathway, cfoI is responsible for the hydroxylation of the flavonoid skeleton at position C3 with cfoF. The pathway begins with the PKS-NRPS hybrid synthetase cfoA that uses benzoic acid or p-hydroxybenzoic acid as a starter unit with four rounds of chain elongation using malonyl-CoA to form the chalcone skeleton. Then, a new type of chalcone isomerase, cfoK, catalyzes the conversion of the chalcone into a flavanone by a histidine-mediated oxa-Michael addition mechanism. The desaturation of flavanone to flavone is catalyzed by a new type of flavone synthase, the flavin mononucleotide (FMN)-dependent oxidoreductase cfoJ. Monooxygenases cfoF, cfoG, and P450 cfoH are responsible for the hydroxylation of the flavonoid skeleton at sites C3, C8, and C2', respectively. Like cfoF, the dehydratase cfoI plays also a role in the hydroxylation of position C3. Methyltransferases cfoB, cfoC, and cfoD then catalyze the methylation of C7-OH, C8-OH, and C3-OH, respectively. Finally, the monooxygenase cfoE is responsible for the chlorination of flavonoid at position C3'. This is Dehydratase cfoI from Aspergillus candidus.